The following is a 392-amino-acid chain: L-serine phosphate decarboxylase (392 aa).

Residues 22-29 form a required for catalytic activity region; that stretch reads NAGSHSPS. An O-phospho-L-serine-binding site is contributed by asparagine 180. An N6-(pyridoxal phosphate)lysine modification is found at lysine 243. Residues arginine 354 and arginine 368 each coordinate O-phospho-L-serine.

This sequence belongs to the class-II pyridoxal-phosphate-dependent aminotransferase family. Homodimer. Pyridoxal 5'-phosphate is required as a cofactor.

The catalysed reaction is O-phospho-L-serine + H(+) = phosphoethanolamine + CO2. Its pathway is cofactor biosynthesis. In terms of biological role, pyridoxal phosphate (PLP)-dependent decarboxylase involved in the biosynthesis of norcobamides, cofactors in the tetrachloroethene reductive dehalogenase PceA of S.multivorans. Catalyzes the decarboxylation of L-serine O-phosphate to ethanolamine O-phosphate, the precursor for the linkage between the nucleotide loop and the corrin ring in norcobamide. Less active with L-threonine phosphate. No activity with L-serine or L-threonine. Has no aminotransferase activity as no production of L-glutamate with L-histidinol phosphate and 2-oxoglutarate as substrates. Complements growth defects in the S.enterica cobD deletion mutant, but of the cobamides, the norpseudo-vitamin B12 (norpseudo-B12) rather than the pseudo-B12 is produced in the mutant. However, addition of L-threonine phosphate to the culture minimal medium of the mutant results in formation of also the pseudo-B12, indicating the dual substrate specificity of this enzyme. In Sulfurospirillum multivorans (strain DM 12446 / JCM 15788 / NBRC 109480), this protein is L-serine phosphate decarboxylase.